Here is a 208-residue protein sequence, read N- to C-terminus: Ras-related protein Rab-6A (208 aa).

An N-acetylserine modification is found at S2. The GTP site is built by S23, V24, G25, K26, T27, S28, D39, N40, Y42, and T45. Mg(2+) is bound at residue T27. The Switch 1 signature appears at 32-50; it reads RFMYDSFDNTYQATIGIDF. T45 and D68 together coordinate Mg(2+). Positions 69–88 match the Switch 2 motif; sequence TAGQERFRSLIPSYIRDSAA. GTP is bound by residues G71, N126, K127, D129, S156, A157, and K158. 2 S-geranylgeranyl cysteine lipidation sites follow: C206 and C208. A Cysteine methyl ester modification is found at C208.

Belongs to the small GTPase superfamily. Rab family. Mg(2+) is required as a cofactor.

The protein localises to the golgi apparatus membrane. The enzyme catalyses GTP + H2O = GDP + phosphate + H(+). Its activity is regulated as follows. Regulated by guanine nucleotide exchange factors (GEFs) which promote the exchange of bound GDP for free GTP. Regulated by GTPase activating proteins (GAPs) which increase the GTP hydrolysis activity. Inhibited by GDP dissociation inhibitors (GDIs). Functionally, the small GTPases Rab are key regulators of intracellular membrane trafficking, from the formation of transport vesicles to their fusion with membranes. Rabs cycle between an inactive GDP-bound form and an active GTP-bound form that is able to recruit to membranes different sets of downstream effectors directly responsible for vesicle formation, movement, tethering and fusion. RAB6A acts as a regulator of COPI-independent retrograde transport from the Golgi apparatus towards the endoplasmic reticulum (ER). The sequence is that of Ras-related protein Rab-6A (RAB6A) from Gallus gallus (Chicken).